The chain runs to 262 residues: Acyl-[acyl-carrier-protein]--UDP-N-acetylglucosamine O-acyltransferase (262 aa).

This sequence belongs to the transferase hexapeptide repeat family. LpxA subfamily. As to quaternary structure, homotrimer.

It localises to the cytoplasm. It carries out the reaction a (3R)-hydroxyacyl-[ACP] + UDP-N-acetyl-alpha-D-glucosamine = a UDP-3-O-[(3R)-3-hydroxyacyl]-N-acetyl-alpha-D-glucosamine + holo-[ACP]. It participates in glycolipid biosynthesis; lipid IV(A) biosynthesis; lipid IV(A) from (3R)-3-hydroxytetradecanoyl-[acyl-carrier-protein] and UDP-N-acetyl-alpha-D-glucosamine: step 1/6. Its function is as follows. Involved in the biosynthesis of lipid A, a phosphorylated glycolipid that anchors the lipopolysaccharide to the outer membrane of the cell. This chain is Acyl-[acyl-carrier-protein]--UDP-N-acetylglucosamine O-acyltransferase, found in Haemophilus influenzae (strain ATCC 51907 / DSM 11121 / KW20 / Rd).